Consider the following 947-residue polypeptide: Bifunctional glutamine synthetase adenylyltransferase/adenylyl-removing enzyme (947 aa).

Residues 1–440 form an adenylyl removase region; that stretch reads MTPLSSPLSQ…VFNELIGDDE (440 aa). The tract at residues 450-947 is adenylyl transferase; the sequence is SEPWREVWQD…ASWRKWLVAV (498 aa).

It belongs to the GlnE family. Mg(2+) serves as cofactor.

It catalyses the reaction [glutamine synthetase]-O(4)-(5'-adenylyl)-L-tyrosine + phosphate = [glutamine synthetase]-L-tyrosine + ADP. It carries out the reaction [glutamine synthetase]-L-tyrosine + ATP = [glutamine synthetase]-O(4)-(5'-adenylyl)-L-tyrosine + diphosphate. In terms of biological role, involved in the regulation of glutamine synthetase GlnA, a key enzyme in the process to assimilate ammonia. When cellular nitrogen levels are high, the C-terminal adenylyl transferase (AT) inactivates GlnA by covalent transfer of an adenylyl group from ATP to specific tyrosine residue of GlnA, thus reducing its activity. Conversely, when nitrogen levels are low, the N-terminal adenylyl removase (AR) activates GlnA by removing the adenylyl group by phosphorolysis, increasing its activity. The regulatory region of GlnE binds the signal transduction protein PII (GlnB) which indicates the nitrogen status of the cell. The protein is Bifunctional glutamine synthetase adenylyltransferase/adenylyl-removing enzyme of Salmonella newport (strain SL254).